A 304-amino-acid chain; its full sequence is D-alanine--D-alanine ligase (304 aa).

Residues 103–299 (KLIWQALGLP…FADLCIEILK (197 aa)) enclose the ATP-grasp domain. Residue 129-184 (EEKLGLPMFVKPAAEGSSVGVVKVKGKGRLKSVYEELKHFQGEIIAERFIGGGEYS) participates in ATP binding. 3 residues coordinate Mg(2+): Asp-253, Glu-266, and Asn-268.

This sequence belongs to the D-alanine--D-alanine ligase family. Mg(2+) serves as cofactor. Mn(2+) is required as a cofactor.

The protein localises to the cytoplasm. The enzyme catalyses 2 D-alanine + ATP = D-alanyl-D-alanine + ADP + phosphate + H(+). The protein operates within cell wall biogenesis; peptidoglycan biosynthesis. In terms of biological role, cell wall formation. The chain is D-alanine--D-alanine ligase from Neisseria meningitidis serogroup A / serotype 4A (strain DSM 15465 / Z2491).